A 371-amino-acid polypeptide reads, in one-letter code: N-acetyldiaminopimelate deacetylase (371 aa).

Residue D68 is part of the active site. E127 functions as the Proton acceptor in the catalytic mechanism.

This sequence belongs to the peptidase M20A family. N-acetyldiaminopimelate deacetylase subfamily.

It carries out the reaction N-acetyl-(2S,6S)-2,6-diaminopimelate + H2O = (2S,6S)-2,6-diaminopimelate + acetate. Its pathway is amino-acid biosynthesis; L-lysine biosynthesis via DAP pathway; LL-2,6-diaminopimelate from (S)-tetrahydrodipicolinate (acetylase route): step 3/3. Its function is as follows. Catalyzes the conversion of N-acetyl-diaminopimelate to diaminopimelate and acetate. The protein is N-acetyldiaminopimelate deacetylase of Listeria welshimeri serovar 6b (strain ATCC 35897 / DSM 20650 / CCUG 15529 / CIP 8149 / NCTC 11857 / SLCC 5334 / V8).